The chain runs to 431 residues: Beclin-2 (431 aa).

The tract at residues 17–74 (LSGSSESRSLPAAPAPTSGQAEPGDTREPGVTTREVTDAEEQQDGASSRSPPGDGSVS) is disordered. Residues 125–248 (LLEQLDIQLA…ARVQRDRLKE (124 aa)) adopt a coiled-coil conformation. The segment at 173–243 (EARLVQELED…NQLQYARVQR (71 aa)) is required for homodimer formation.

This sequence belongs to the beclin family. As to quaternary structure, homodimer (via coiled-coil domain). Interacts (via coiled-coil domain) with ATG14 (via coiled-coil domain); this interaction is tighter than BECN2 self-association. Interacts with AMBRA1, UVRAG and PIK3C3/VPS34; these interactions are not disrupted by starvation. Does not interact with RUBCN. Interacts (via N-terminus) with GPRASP1/GASP1; the interaction is direct. As to expression, present in fetal and adult brain (at protein level).

The protein resides in the cytoplasm. Its function is as follows. Involved in 2 distinct lysosomal degradation pathways: acts as a regulator of autophagy and as a regulator of G-protein coupled receptors turnover. Regulates degradation in lysosomes of a variety of G-protein coupled receptors via its interaction with GPRASP1/GASP1. The chain is Beclin-2 from Homo sapiens (Human).